The following is a 427-amino-acid chain: Gamma-glutamyl phosphate reductase (427 aa).

This sequence belongs to the gamma-glutamyl phosphate reductase family.

It localises to the cytoplasm. The catalysed reaction is L-glutamate 5-semialdehyde + phosphate + NADP(+) = L-glutamyl 5-phosphate + NADPH + H(+). The protein operates within amino-acid biosynthesis; L-proline biosynthesis; L-glutamate 5-semialdehyde from L-glutamate: step 2/2. Catalyzes the NADPH-dependent reduction of L-glutamate 5-phosphate into L-glutamate 5-semialdehyde and phosphate. The product spontaneously undergoes cyclization to form 1-pyrroline-5-carboxylate. The protein is Gamma-glutamyl phosphate reductase of Brucella canis (strain ATCC 23365 / NCTC 10854 / RM-666).